We begin with the raw amino-acid sequence, 601 residues long: Coronin-like protein crn1 (601 aa).

5 WD repeats span residues 79–119 (GHTA…TVME), 132–172 (GHSR…AHVS), 174–213 (KMDVMCQSMSFNADGTRLVTTSRDKKVRVWDPRTDKPVSV), 220–260 (AKNP…EPIG), and 266–306 (DTGS…FHYL). Disordered regions lie at residues 361 to 386 (SDIYPPAPSGKPSLTAEEWASGKDAQ) and 407 to 540 (SATV…VEEK). 3 stretches are compositionally biased toward basic and acidic residues: residues 419-429 (KHNEEKVETPK), 437-453 (KPKESAEEQKPSKEPEV), and 462-495 (KVEEPSKKRDEDNHQKEETVTQPKREKTPVEKSF). A phosphoserine mark is found at S500 and S501. Basic and acidic residues predominate over residues 507–526 (EDVKKEPSEEKKLEVSDEAP). S553 is subject to Phosphoserine. Residues 556–600 (NLADLNKRFEGFEKRYEEELAIRDWKIAQLEDKLAKLTEAIKEKC) adopt a coiled-coil conformation.

Belongs to the WD repeat coronin family. Binds to F-actin.

The protein is Coronin-like protein crn1 (crn1) of Schizosaccharomyces pombe (strain 972 / ATCC 24843) (Fission yeast).